The primary structure comprises 260 residues: Thiazole synthase (260 aa).

Lys-96 functions as the Schiff-base intermediate with DXP in the catalytic mechanism. Residues Gly-157, Ala-184 to Gly-185, and Asn-206 to Thr-207 contribute to the 1-deoxy-D-xylulose 5-phosphate site.

Belongs to the ThiG family. In terms of assembly, homotetramer. Forms heterodimers with either ThiH or ThiS.

Its subcellular location is the cytoplasm. The enzyme catalyses [ThiS sulfur-carrier protein]-C-terminal-Gly-aminoethanethioate + 2-iminoacetate + 1-deoxy-D-xylulose 5-phosphate = [ThiS sulfur-carrier protein]-C-terminal Gly-Gly + 2-[(2R,5Z)-2-carboxy-4-methylthiazol-5(2H)-ylidene]ethyl phosphate + 2 H2O + H(+). It participates in cofactor biosynthesis; thiamine diphosphate biosynthesis. Functionally, catalyzes the rearrangement of 1-deoxy-D-xylulose 5-phosphate (DXP) to produce the thiazole phosphate moiety of thiamine. Sulfur is provided by the thiocarboxylate moiety of the carrier protein ThiS. In vitro, sulfur can be provided by H(2)S. This is Thiazole synthase from Rhodopseudomonas palustris (strain BisB18).